Consider the following 169-residue polypeptide: Crossover junction endodeoxyribonuclease RuvC (169 aa).

Active-site residues include Asp-11, Glu-71, and Asp-143. Residues Asp-11, Glu-71, and Asp-143 each coordinate Mg(2+).

Belongs to the RuvC family. As to quaternary structure, homodimer which binds Holliday junction (HJ) DNA. The HJ becomes 2-fold symmetrical on binding to RuvC with unstacked arms; it has a different conformation from HJ DNA in complex with RuvA. In the full resolvosome a probable DNA-RuvA(4)-RuvB(12)-RuvC(2) complex forms which resolves the HJ. Mg(2+) is required as a cofactor.

Its subcellular location is the cytoplasm. It carries out the reaction Endonucleolytic cleavage at a junction such as a reciprocal single-stranded crossover between two homologous DNA duplexes (Holliday junction).. The RuvA-RuvB-RuvC complex processes Holliday junction (HJ) DNA during genetic recombination and DNA repair. Endonuclease that resolves HJ intermediates. Cleaves cruciform DNA by making single-stranded nicks across the HJ at symmetrical positions within the homologous arms, yielding a 5'-phosphate and a 3'-hydroxyl group; requires a central core of homology in the junction. The consensus cleavage sequence is 5'-(A/T)TT(C/G)-3'. Cleavage occurs on the 3'-side of the TT dinucleotide at the point of strand exchange. HJ branch migration catalyzed by RuvA-RuvB allows RuvC to scan DNA until it finds its consensus sequence, where it cleaves and resolves the cruciform DNA. The polypeptide is Crossover junction endodeoxyribonuclease RuvC (Allorhizobium ampelinum (strain ATCC BAA-846 / DSM 112012 / S4) (Agrobacterium vitis (strain S4))).